The primary structure comprises 723 residues: Catalase-peroxidase (723 aa).

The tryptophyl-tyrosyl-methioninium (Trp-Tyr) (with M-252) cross-link spans 98-226 (WHSAGSYRVG…LAAVMMGLIY (129 aa)). Residue His-99 is the Proton acceptor of the active site. The tryptophyl-tyrosyl-methioninium (Tyr-Met) (with W-98) cross-link spans 226–252 (YVNPEGVDGNPDPLKTAKDMRVTFARM). His-267 serves as a coordination point for heme b.

The protein belongs to the peroxidase family. Peroxidase/catalase subfamily. In terms of assembly, homodimer or homotetramer. It depends on heme b as a cofactor. In terms of processing, formation of the three residue Trp-Tyr-Met cross-link is important for the catalase, but not the peroxidase activity of the enzyme.

It catalyses the reaction H2O2 + AH2 = A + 2 H2O. It carries out the reaction 2 H2O2 = O2 + 2 H2O. Functionally, bifunctional enzyme with both catalase and broad-spectrum peroxidase activity. In Vibrio vulnificus (strain YJ016), this protein is Catalase-peroxidase.